Reading from the N-terminus, the 2281-residue chain is MKGHQFKSWIFELREILREIKNSHYFLDSWTQFNSVGSFIHIFFHQERFIKLFDPRIWSILLSRNSQGSISNRYFTIKGVILFVVVVLIYRINNRNMVESKNLYLIGLLPIPMNSIGPKNDTLEESVGSSNINRLIVSLLSLPKGKKISESCFLNPKESTWVLPITKKCSIPESNWGSRWWRKWIGKGGDSSCKISNETAAGIEILFKEKDLKYLEFLFVYYMDDPTRKDRDWELFDRLSLRKRRNTINLNSGPLFEILVKHWISYLMSAFREKIPIEAEGFFKQQGAGSTIQSNDIEHVSHLFSRNKWAISLQNCAQFHMWQFRQDLFISWGKESDFLRNVSRENLIWLDNVWLVNKDRFFSKVRNVSSNIQYDSTRSSFVQVTDSSQLKGSSDQSRDHLDSISNEDSEYHTLINQREIQQLKERSILLDPSFLQTERTEIESDRFPKCLSGYSSMSRLFTEREKQMINHLLPEEIEEFLGNPTRSVRSFFSDRWSELHLGLNPTERSTRDQKLLKKQQDLSFVPSRRSENKEMVNIFKIITYLQNTVSIHPISSDPGCDMVPKDEPDMDSSNKISFLNKNPFFDLFHLFHARNRGGYTLHHDFELEERFQEMADLFTLSITEPDLVYHKGFAFSIDSYGLDQKQFLNEVFNSRDESKKKSLLVLPLIFYEENESFSRRIRKKWVRISCGNDLEDPQPKIVIFASNNIMGAVNQYRLIRNLIQIQSSTYGYIRNVLNRFFLMNRSDRNFEYGIQIQRDQIGKDTLNHRTIMKYTINQHLSNLKKSQKKWLDPLILISRTERSMNRDPDAYRYKGSNGSKNFQEHLEHFVSEQKSHFQVMFDRLRINQYSIDWSEVIDKKDLSKPLRFFLSKSLLFLSKLLFFLSNSLPFFCVSFGNIPIHRSEIYIYEFKGPDDQLCSQLLESIGLQIVHLKKLKPFLLDDHDTSQKSKFLINGGTISPFLFNKIPKWMVDSFHTRNNRRKSFDNTDSYFSMIFHDQDNWLNPVKPFHRSSLISSFYKANRLRFLNNPHHFCFYCNTRFPLSVEKARINNYDFTYGQFLNILLRMNKIFSLCVGKKKHAFGGRDTISPIESQVSNIFIPNDFPQSGDETYNLYKSFHFLSRSDPFVRRAIYSIADISGTPLTEGQIVNFERTYCQPLSDMNLSDSEGKNLHQYRNFNSNMGLIHTPYSEKYLPSEKRKKRILCLKKCVEKGQMYRTFQRDSAFSTLSKWNLFQTYMPWFLTSTGYKYLNLIFLDTFSDLLPILSSSQKLVSIFHDIMHGSGISWRILQKNLCLPQWNLISEISSKCLHNLLLSEERIHRNKNNESPLISTHLRSPNVREFLYSTLFLLLVAGYLVRTHLLFVSRVSSELQTEFEKVKSLIIPSSMIELRKLLDRYPTSEPNSFWLKNIFLAALEQLGDSLEEIRGSASGGNMLGPAYGVKSIRSKKKYLNINLIDIVDLIPNPINRITFSRNTRHLSHTSKEIYSLIRKRKNVNGDWIDDKIESWVANSDSIGDEEREFLVQFSTLTTEKGIDQILLSLTHSDHLSKNDSGYQMIEQPGAIYLRYLVDIHKKYLMNYEFNTFCLAERRIFLAHYQTITYSQTSCGANSFHFPSHGKPFSLRLALSPSRAILVIGSIGSGRSYLVKYLATNSYVPFITVFLNKFLDNKPKGFLIDDINIDDSDDIDASDDIDRDLDTELELLTMMNALTMDMMPEIDRFYITLQFELAKAMSPCIIWIPNIHDLDVNESNYLSLGLLVNHLSMDCERCSTRNILVIASTHIPQKVDPALIAPNKLNTCIKIRRLLIPQQRKHLFTLSYTRGFHLEKKMFHTNGFGSITMGSNARDLVALTNEALSISITQKKSIIDTNTIRSALYRQTWYLRSQVRSVQDHGILFYQIGRAVAQNVFLSNCPIDPISIYMKKKSCNEGDFYLYKWYFELGTSMKKLTILLYLLSCSAGSVAQDLWSLPGPDEKNGITSYGLVENDSDLVHGLLEVEGALVGSSRTEKDCSQFDNDRVTLLLRPEPRNPLDMMQSGSCSILDQRFLYEKYESEFEEGEGEGALDPQQIEEDLFNYIVWAPRIWRPWAFLFDCIERPNELGFPYWSRPFWGKRIIYDEEDELQENDSEFLQNGTVQYQTRDRSSKEQGPFRISQFIWDPADPLFFLFKDQPPGSVFSHRELFADEEMSKGLLTSQTDPPTSIYKRWFIKNTQEKHFELLINRQRWLRTNSSLSNGSFRSNTLSESYQYLSNLFLSNGTLLDQMTKTLLRKRWLFPDEMKIGFM.

1635–1642 is a binding site for ATP; the sequence is GSIGSGRS.

This sequence belongs to the Ycf2 family.

Its subcellular location is the plastid. It localises to the chloroplast stroma. Its function is as follows. Probable ATPase of unknown function. Its presence in a non-photosynthetic plant (Epifagus virginiana) and experiments in tobacco indicate that it has an essential function which is probably not related to photosynthesis. This chain is Protein Ycf2, found in Coffea arabica (Arabian coffee).